The primary structure comprises 69 residues: UPF0291 protein CD630_10710 (69 aa).

The protein belongs to the UPF0291 family.

It localises to the cytoplasm. The sequence is that of UPF0291 protein CD630_10710 from Clostridioides difficile (strain 630) (Peptoclostridium difficile).